Here is a 159-residue protein sequence, read N- to C-terminus: Cyclic pyranopterin monophosphate synthase (159 aa).

Substrate contacts are provided by residues 75–77 (LCH) and 113–114 (ME). Asp128 is a catalytic residue.

It belongs to the MoaC family. As to quaternary structure, homohexamer; trimer of dimers.

It catalyses the reaction (8S)-3',8-cyclo-7,8-dihydroguanosine 5'-triphosphate = cyclic pyranopterin phosphate + diphosphate. Its pathway is cofactor biosynthesis; molybdopterin biosynthesis. Its function is as follows. Catalyzes the conversion of (8S)-3',8-cyclo-7,8-dihydroguanosine 5'-triphosphate to cyclic pyranopterin monophosphate (cPMP). The protein is Cyclic pyranopterin monophosphate synthase of Aliivibrio fischeri (strain MJ11) (Vibrio fischeri).